Reading from the N-terminus, the 363-residue chain is NAD(P)H-quinone oxidoreductase subunit 1, chloroplastic (363 aa).

Helical transmembrane passes span 27-47 (LIPI…IVWL), 93-113 (WLFS…YLVV), 124-144 (LGVG…GLLM), 162-182 (AAQA…VALL), 200-220 (ILGW…IASL), 250-270 (FGLF…FVSV), 303-323 (ATLG…LSIL), and 343-363 (FLLP…LALL).

Belongs to the complex I subunit 1 family. NDH is composed of at least 16 different subunits, 5 of which are encoded in the nucleus.

The protein localises to the plastid. It is found in the chloroplast thylakoid membrane. It carries out the reaction a plastoquinone + NADH + (n+1) H(+)(in) = a plastoquinol + NAD(+) + n H(+)(out). The enzyme catalyses a plastoquinone + NADPH + (n+1) H(+)(in) = a plastoquinol + NADP(+) + n H(+)(out). NDH shuttles electrons from NAD(P)H:plastoquinone, via FMN and iron-sulfur (Fe-S) centers, to quinones in the photosynthetic chain and possibly in a chloroplast respiratory chain. The immediate electron acceptor for the enzyme in this species is believed to be plastoquinone. Couples the redox reaction to proton translocation, and thus conserves the redox energy in a proton gradient. This chain is NAD(P)H-quinone oxidoreductase subunit 1, chloroplastic, found in Chaetosphaeridium globosum (Charophycean green alga).